The chain runs to 79 residues: Sulfur carrier protein TusA (79 aa).

Residue cysteine 15 is the Cysteine persulfide intermediate of the active site.

The protein belongs to the sulfur carrier protein TusA family. As to quaternary structure, interacts with IscS.

The protein resides in the cytoplasm. It participates in tRNA modification. Functionally, sulfur carrier protein involved in sulfur trafficking in the cell. Part of a sulfur-relay system required for 2-thiolation during synthesis of 2-thiouridine of the modified wobble base 5-methylaminomethyl-2-thiouridine (mnm(5)s(2)U) in tRNA. Interacts with IscS and stimulates its cysteine desulfurase activity. Accepts an activated sulfur from IscS, which is then transferred to TusD, and thus determines the direction of sulfur flow from IscS to 2-thiouridine formation. Also appears to be involved in sulfur transfer for the biosynthesis of molybdopterin. In Buchnera aphidicola subsp. Baizongia pistaciae (strain Bp), this protein is Sulfur carrier protein TusA.